Consider the following 2472-residue polypeptide: Nuclear receptor corepressor 2 (2472 aa).

Disordered regions lie at residues Met-1–Pro-20, Arg-47–Ser-168, and Ile-190–Glu-220. Arg-18 is modified (asymmetric dimethylarginine). Polar residues predominate over residues Ser-51–Gln-60. 2 positions are modified to phosphoserine: Ser-54 and Ser-67. Composition is skewed to basic and acidic residues over residues Arg-78–Ser-88 and Gly-96–Leu-112. Ser-149 and Ser-152 each carry phosphoserine. Residues Ser-165–Pro-207 adopt a coiled-coil conformation. Residues Glu-203–Lys-212 are compositionally biased toward basic and acidic residues. Ser-215 is modified (phosphoserine). The segment at Leu-254–Lys-312 is interaction with SIN3A/B. Positions Met-389–Lys-480 are deacetylase activation domain (DAD). The SANT 1 domain maps to Gln-427–Asn-478. The 1D-myo-inositol 1,4,5,6-tetrakisphosphate site is built by Lys-449, Tyr-470, and Tyr-471. Disordered stretches follow at residues Tyr-487–Thr-618, His-665–Ile-1107, and Ser-1173–Ser-1197. Residues Lys-492 to Val-560 adopt a coiled-coil conformation. A Phosphoserine modification is found at Ser-493. A compositionally biased stretch (low complexity) spans Gln-494–Gln-507. Positions Ser-512–Asp-548 are enriched in basic and acidic residues. Thr-549 carries the post-translational modification Phosphothreonine. Position 550 is a phosphoserine (Ser-550). Residues Ala-592–Ser-609 show a composition bias toward polar residues. Positions Asn-606 to Asn-657 constitute an SANT 2 domain. A coiled-coil region spans residues Leu-658 to Thr-682. The segment covering Asn-709–Glu-718 has biased composition (acidic residues). Polar residues predominate over residues Val-739 to Ser-750. Ser-747 and Ser-750 each carry phosphoserine. 2 stretches are compositionally biased toward pro residues: residues Thr-773–Glu-782 and Glu-789–Pro-811. Basic and acidic residues-rich tracts occupy residues Glu-831–Glu-850 and Glu-859–Glu-868. Residue Lys-878 is modified to N6-acetyllysine. The segment covering Gly-905–Thr-919 has biased composition (low complexity). Position 938 is a phosphoserine (Ser-938). At Thr-945 the chain carries Phosphothreonine. Ser-955 is subject to Phosphoserine. Lys-958 is modified (N6-acetyllysine). Basic and acidic residues predominate over residues Lys-978–Val-988. Residues Pro-989 to Thr-1000 are compositionally biased toward pro residues. Residues Leu-1090–Val-1101 show a composition bias toward low complexity. Residues Lys-1181 and Lys-1209 each carry the N6-acetyllysine modification. Position 1220 is a phosphoserine (Ser-1220). 3 disordered regions span residues Ser-1254–Lys-1277, Leu-1345–Lys-1378, and Pro-1410–Val-1443. Residue Thr-1350 is modified to Phosphothreonine. Basic and acidic residues predominate over residues Asp-1359–Pro-1368. Phosphoserine occurs at positions 1449, 1509, and 1565. A disordered region spans residues Lys-1479 to Ile-1578. Residue Arg-1624 is modified to Asymmetric dimethylarginine. The tract at residues Thr-1734–Leu-1826 is disordered. The segment covering Ser-1740–Pro-1753 has biased composition (low complexity). Phosphoserine occurs at positions 1746 and 1749. The span at Ser-1765–Ser-1778 shows a compositional bias: basic and acidic residues. A compositionally biased stretch (polar residues) spans Arg-1807–Leu-1826. Phosphoserine is present on Ser-1819. An Omega-N-methylarginine modification is found at Arg-1854. Disordered regions lie at residues Arg-1857–Pro-1878, Lys-1898–Ser-1986, and Ala-2001–Ala-2078. Residues Glu-1899–Ala-1913 are compositionally biased toward basic and acidic residues. Lys-1920 is subject to N6-acetyllysine. Over residues Glu-1925 to Ser-1938 the composition is skewed to low complexity. Ser-1963 is modified (phosphoserine). Residue Lys-1983 is modified to N6-acetyllysine. 5 positions are modified to phosphoserine: Ser-2004, Ser-2012, Ser-2015, Ser-2016, and Ser-2018. At Thr-2020 the chain carries Phosphothreonine. A compositionally biased stretch (basic and acidic residues) spans Thr-2020–His-2043. Ser-2035 carries the phosphoserine modification. Residues Leu-2064–Leu-2075 are compositionally biased toward low complexity. The interval Arg-2086–Leu-2090 is required for interaction with RARA in the absence of its ligand. The short motif at Ile-2094 to Ile-2098 is the CORNR box of ID1 element. Residues Arg-2132–Phe-2226 are disordered. Ser-2161, Ser-2181, and Ser-2215 each carry phosphoserine. A CORNR box of ID2 motif is present at residues Leu-2296–Ile-2300. A disordered region spans residues Gly-2343–Pro-2459. Ser-2371 carries the post-translational modification Phosphoserine. Residues Leu-2439 to His-2450 are compositionally biased toward low complexity.

It belongs to the N-CoR nuclear receptor corepressors family. As to quaternary structure, forms a large corepressor complex that contains SIN3A/B and histone deacetylases HDAC1 and HDAC2. This complex associates with the thyroid (TR) and the retinoid acid receptors (RAR) in the absence of ligand, and may stabilize their interaction with TFIIB. Interacts directly with RARA in the absence of ligand; the interaction represses RARA activity. Interacts (isoform SMRT) with HDAC10. Interacts with MINT. Component of the N-Cor repressor complex, at least composed of NCOR1, NCOR2, HDAC3, TBL1X, TBL1R, CORO2A and GPS2. Interacts with CBFA2T3 and ATXN1L. Interacts with RARB; the interaction is weak and does not repress RARB transactivational activity. Interacts (via 1D-myo-inositol 1,4,5,6-tetrakisphosphate) with HDAC3; promoting the histone deacetylase activity of HDAC3. Interacts with HDAC7 and C1D. Interacts with NR4A2; this interaction increases in the absence of PITX3. Interacts with BCL6 (via the BTB domain), required for BCL6 transcriptional repressor activity on a subset of target genes. Forms ternary complexes with BCOR and BCL6 on target gene promoters but, on enhancer elements, interacts with BCL6 and HDAC3 to repress proximal gene expression. May interact with DEAF1. Interacts with RXRA. Interacts with MECP2. Interacts with ZBTB7A. Interacts with AR. Interacts with TBL1Y. Interacts with SANBR (via the BTB domain). In terms of tissue distribution, ubiquitous. Also widely expressed in early embryos.

It is found in the nucleus. Functionally, transcriptional corepressor that mediates the transcriptional repression activity of some nuclear receptors by promoting chromatin condensation, thus preventing access of the basal transcription. Acts by recruiting chromatin modifiers, such as histone deacetylases HDAC1, HDAC2 and HDAC3. Required to activate the histone deacetylase activity of HDAC3. Involved in the regulation BCL6-dependent of the germinal center (GC) reactions, mainly through the control of the GC B-cells proliferation and survival. Recruited by ZBTB7A to the androgen response elements/ARE on target genes, negatively regulates androgen receptor signaling and androgen-induced cell proliferation. This is Nuclear receptor corepressor 2 (Ncor2) from Mus musculus (Mouse).